Reading from the N-terminus, the 565-residue chain is Methionine--tRNA ligase (565 aa).

The short motif at 16–26 (PYAYGVPHLGN) is the 'HIGH' region element. Zn(2+)-binding residues include C148, C151, C161, and C164. The short motif at 338–342 (KFSKS) is the 'KMSKS' region element. K341 serves as a coordination point for ATP.

It belongs to the class-I aminoacyl-tRNA synthetase family. MetG type 1 subfamily. Zn(2+) serves as cofactor.

The protein resides in the cytoplasm. It catalyses the reaction tRNA(Met) + L-methionine + ATP = L-methionyl-tRNA(Met) + AMP + diphosphate. In terms of biological role, is required not only for elongation of protein synthesis but also for the initiation of all mRNA translation through initiator tRNA(fMet) aminoacylation. This chain is Methionine--tRNA ligase, found in Thermofilum pendens (strain DSM 2475 / Hrk 5).